The sequence spans 280 residues: Energy-coupling factor transporter ATP-binding protein EcfA2 (280 aa).

The region spanning 3–245 (ISLENVSYTY…VAFLKEKQLG (243 aa)) is the ABC transporter domain. Residue 40–47 (GHTGSGKS) participates in ATP binding.

The protein belongs to the ABC transporter superfamily. Energy-coupling factor EcfA family. Forms a stable energy-coupling factor (ECF) transporter complex composed of 2 membrane-embedded substrate-binding proteins (S component), 2 ATP-binding proteins (A component) and 2 transmembrane proteins (T component).

Its subcellular location is the cell membrane. Functionally, ATP-binding (A) component of a common energy-coupling factor (ECF) ABC-transporter complex. Unlike classic ABC transporters this ECF transporter provides the energy necessary to transport a number of different substrates. This Streptococcus thermophilus (strain CNRZ 1066) protein is Energy-coupling factor transporter ATP-binding protein EcfA2.